The primary structure comprises 284 residues: Acetylglutamate kinase (284 aa).

Substrate is bound by residues 66-67, R88, and N179; that span reads GG.

The protein belongs to the acetylglutamate kinase family. ArgB subfamily.

It is found in the cytoplasm. The enzyme catalyses N-acetyl-L-glutamate + ATP = N-acetyl-L-glutamyl 5-phosphate + ADP. Its pathway is amino-acid biosynthesis; L-arginine biosynthesis; N(2)-acetyl-L-ornithine from L-glutamate: step 2/4. Its function is as follows. Catalyzes the ATP-dependent phosphorylation of N-acetyl-L-glutamate. The sequence is that of Acetylglutamate kinase from Actinobacillus pleuropneumoniae serotype 5b (strain L20).